Here is a 370-residue protein sequence, read N- to C-terminus: ADP-ribosylhydrolase ARH3 (370 aa).

E47 is a binding site for Mg(2+). Residue T70 is modified to Phosphothreonine. Positions 82, 83, and 84 each coordinate Mg(2+). D83 is a substrate binding site. Residues 152-158, H188, L241, and I277 each bind substrate; that span reads KGSYGNG. Positions 320, 322, and 323 each coordinate Mg(2+).

Belongs to the ADP-ribosylglycohydrolase family. In terms of assembly, monomer. The cofactor is Mg(2+). In terms of tissue distribution, ubiquitous.

It is found in the nucleus. Its subcellular location is the cytoplasm. The protein localises to the chromosome. The protein resides in the mitochondrion matrix. It catalyses the reaction [(1''-&gt;2')-ADP-alpha-D-ribose](n) + H2O = [(1''-&gt;2')-ADP-alpha-D-ribose](n-1) + ADP-D-ribose. The catalysed reaction is 1''-O-acetyl-ADP-alpha-D-ribose + H2O = ADP-D-ribose + acetate + H(+). It carries out the reaction O-(ADP-D-ribosyl)-L-seryl-[protein] + H2O = ADP-D-ribose + L-seryl-[protein]. The enzyme catalyses alpha-NAD(+) + H2O = ADP-D-ribose + nicotinamide + H(+). With respect to regulation, the protein undergoes a dramatic conformational switch from closed to open states upon substrate-binding, which enables specific substrate recognition for the 1''-O-linkage. The glutamate flap (Glu-47) blocks substrate entrance to Mg(2+) in the unliganded closed state. In presence of substrate, Glu-47 is ejected from the active site: this closed-to-open transition significantly widens the substrate-binding channel and precisely positions the scissile 1''-O-linkage for cleavage while securing tightly 2'- and 3'-hydroxyls of ADP-ribose. In terms of biological role, ADP-ribosylhydrolase that preferentially hydrolyzes the scissile alpha-O-linkage attached to the anomeric C1'' position of ADP-ribose and acts on different substrates, such as proteins ADP-ribosylated on serine and threonine, free poly(ADP-ribose) and O-acetyl-ADP-D-ribose. Specifically acts as a serine mono-ADP-ribosylhydrolase by mediating the removal of mono-ADP-ribose attached to serine residues on proteins, thereby playing a key role in DNA damage response. Serine ADP-ribosylation of proteins constitutes the primary form of ADP-ribosylation of proteins in response to DNA damage. Does not hydrolyze ADP-ribosyl-arginine, -cysteine, -diphthamide, or -asparagine bonds. Also able to degrade protein free poly(ADP-ribose), which is synthesized in response to DNA damage: free poly(ADP-ribose) acts as a potent cell death signal and its degradation by ADPRHL2 protects cells from poly(ADP-ribose)-dependent cell death, a process named parthanatos. Also hydrolyzes free poly(ADP-ribose) in mitochondria. Specifically digests O-acetyl-ADP-D-ribose, a product of deacetylation reactions catalyzed by sirtuins. Specifically degrades 1''-O-acetyl-ADP-D-ribose isomer, rather than 2''-O-acetyl-ADP-D-ribose or 3''-O-acetyl-ADP-D-ribose isomers. The protein is ADP-ribosylhydrolase ARH3 (Adprs) of Mus musculus (Mouse).